The chain runs to 347 residues: GMP reductase (347 aa).

Residue 108–131 coordinates NADP(+); sequence ADFEKTVQILALNPALNFVCIDVA. Residues G181 and G183 each contribute to the K(+) site. C186 serves as the catalytic Thioimidate intermediate. Residue 216–239 participates in NADP(+) binding; sequence IVSDGGCTMPGDVAKAFGGGADFV.

This sequence belongs to the IMPDH/GMPR family. GuaC type 1 subfamily. As to quaternary structure, homotetramer.

It catalyses the reaction IMP + NH4(+) + NADP(+) = GMP + NADPH + 2 H(+). Its function is as follows. Catalyzes the irreversible NADPH-dependent deamination of GMP to IMP. It functions in the conversion of nucleobase, nucleoside and nucleotide derivatives of G to A nucleotides, and in maintaining the intracellular balance of A and G nucleotides. In Salmonella choleraesuis (strain SC-B67), this protein is GMP reductase.